A 254-amino-acid polypeptide reads, in one-letter code: MALAPSKVSPFSGFSLSDGVGAVRNPTCSVSLSFLNKKVGSRNLGVSASTVPLTGVIFEPFEEVKKEELAVPTAGQVSLARQYYADECESAINEQINVEYNASYVYHSLFAYFDRDNVALKGFARFFKESSEEEREHAEKLMKYQNTRGGRVVLHPIKNVPSEFEHVEKGDALYAMELALSLEKLVNEKLRSVHSVADRNKDPQLADFIESEFLSEQVEAIKKISEYVAQLRMVGKGHGVWHFDQSLLHDGHAA.

The transit peptide at 1 to 48 directs the protein to the chloroplast; it reads MALAPSKVSPFSGFSLSDGVGAVRNPTCSVSLSFLNKKVGSRNLGVSA. The segment at 49-81 is extension peptide (EP); it reads STVPLTGVIFEPFEEVKKEELAVPTAGQVSLAR. The Ferritin-like diiron domain occupies 82–235; it reads QYYADECESA…EYVAQLRMVG (154 aa). Fe cation contacts are provided by Glu-99, Glu-134, His-137, Glu-183, and Gln-217.

The protein belongs to the ferritin family. Oligomer of 24 subunits. There are two types of subunits: L (light) chain and H (heavy) chain. The major chain can be light or heavy, depending on the species and tissue type. The functional molecule forms a roughly spherical shell with a diameter of 12 nm and contains a central cavity into which the insoluble mineral iron core is deposited.

It localises to the plastid. It is found in the chloroplast. The catalysed reaction is 4 Fe(2+) + O2 + 4 H(+) = 4 Fe(3+) + 2 H2O. Stores iron in a soluble, non-toxic, readily available form. Important for iron homeostasis. Has ferroxidase activity. Iron is taken up in the ferrous form and deposited as ferric hydroxides after oxidation. This is Ferritin, chloroplastic (PFE) from Phaseolus vulgaris (Kidney bean).